A 229-amino-acid polypeptide reads, in one-letter code: Non-structural protein V (229 aa).

Polar residues-rich tracts occupy residues 30-46 (ATSQSSLNKPPSQSSRT) and 82-112 (GRQNLDSLSMISNKPQTGTLLMGSDTQLPSP). The tract at residues 30-112 (ATSQSSLNKP…MGSDTQLPSP (83 aa)) is disordered. Zn(2+) is bound by residues His178, Cys197, Cys201, Cys213, Cys215, Cys218, Cys222, and Cys225.

This sequence belongs to the paramyxoviruses V protein family.

In terms of biological role, blocks host interferon signaling. This Homo sapiens (Human) protein is Non-structural protein V (P/V).